We begin with the raw amino-acid sequence, 435 residues long: 5-hydroxybenzimidazole synthase (435 aa).

Substrate is bound by residues methionine 95, tyrosine 124, histidine 163, 186–188 (SKG), 227–230 (NGLR), and glutamate 266. Histidine 270 is a binding site for Zn(2+). Tyrosine 293 serves as a coordination point for substrate. Zn(2+) is bound at residue histidine 334. [4Fe-4S] cluster-binding residues include cysteine 410, cysteine 413, and cysteine 417.

This sequence belongs to the ThiC family. 5-hydroxybenzimidazole synthase subfamily. Homodimer. [4Fe-4S] cluster serves as cofactor.

The catalysed reaction is 5-amino-1-(5-phospho-beta-D-ribosyl)imidazole + AH2 + S-adenosyl-L-methionine = 5-hydroxybenzimidazole + 5'-deoxyadenosine + formate + L-methionine + A + NH4(+) + phosphate + 2 H(+). It functions in the pathway cofactor biosynthesis; adenosylcobalamin biosynthesis. Functionally, catalyzes the complex conversion of aminoimidazole ribotide (AIR) to 5-hydroxybenzimidazole (5-HBI) in a radical S-adenosyl-L-methionine (SAM)-dependent reaction. Is thus involved in the anaerobic biosynthesis of dimethylbenzimidazole (DMB), the lower axial ligand of vitamin B12 (cobalamin). This Desulfuromonas acetoxidans (strain DSM 684 / 11070) protein is 5-hydroxybenzimidazole synthase.